A 223-amino-acid chain; its full sequence is DNA replication complex GINS protein SLD5 (223 aa).

Position 1 is an N-acetylmethionine (Met-1). Ser-12 and Ser-16 each carry phosphoserine. The interval 166–223 (DLDAYVFLRVKERQENILVEPENDEQRDYVIDLEEGSQHLMRYRTVAPLVASGAIQLI) is important for GINS complex assembly.

This sequence belongs to the GINS4/SLD5 family. Component of the CMG helicase complex, a hexameric ring of related MCM2-7 subunits stabilized by CDC45 and the tetrameric GINS complex. Associated with ORC2. Interacts with HELB.

The protein resides in the nucleus. It is found in the chromosome. Its function is as follows. Required for initiation of chromosomal DNA replication. Core component of CDC45-MCM-GINS (CMG) helicase, the molecular machine that unwinds template DNA during replication, and around which the replisome is built. The polypeptide is DNA replication complex GINS protein SLD5 (GINS4) (Bos taurus (Bovine)).